Here is a 288-residue protein sequence, read N- to C-terminus: 4-diphosphocytidyl-2-C-methyl-D-erythritol kinase (288 aa).

K8 is a catalytic residue. 90–100 (PFGAGLGGGSS) is an ATP binding site. D132 is a catalytic residue.

The protein belongs to the GHMP kinase family. IspE subfamily.

The catalysed reaction is 4-CDP-2-C-methyl-D-erythritol + ATP = 4-CDP-2-C-methyl-D-erythritol 2-phosphate + ADP + H(+). Its pathway is isoprenoid biosynthesis; isopentenyl diphosphate biosynthesis via DXP pathway; isopentenyl diphosphate from 1-deoxy-D-xylulose 5-phosphate: step 3/6. Catalyzes the phosphorylation of the position 2 hydroxy group of 4-diphosphocytidyl-2C-methyl-D-erythritol. In Chlorobium chlorochromatii (strain CaD3), this protein is 4-diphosphocytidyl-2-C-methyl-D-erythritol kinase.